Reading from the N-terminus, the 556-residue chain is Hydroxylamine reductase (556 aa).

Residues Cys4, Cys7, Cys19, and Cys26 each contribute to the [4Fe-4S] cluster site. Positions 252, 276, 320, 407, 435, 460, 494, and 496 each coordinate hybrid [4Fe-2O-2S] cluster. Cysteine persulfide is present on Cys407.

This sequence belongs to the HCP family. The cofactor is [4Fe-4S] cluster. Hybrid [4Fe-2O-2S] cluster serves as cofactor.

The protein localises to the cytoplasm. It carries out the reaction A + NH4(+) + H2O = hydroxylamine + AH2 + H(+). Catalyzes the reduction of hydroxylamine to form NH(3) and H(2)O. The polypeptide is Hydroxylamine reductase (Acidithiobacillus ferridurans).